Reading from the N-terminus, the 434-residue chain is Putative polysaccharide biosynthesis protein with aminopeptidase-like domain (434 aa).

2 aminopeptidase-like regions span residues 1 to 55 (MEEI…IHEV) and 57 to 355 (SGTK…IENN). The segment at 56–164 (KSGTKVFDWT…VVIDSSLEDG (109 aa)) is insert. The Zn(2+) site is built by histidine 189, aspartate 195, and histidine 324. A permutated winged helix-turn-helix region spans residues 356–434 (RTYLNLNPKC…LYRVELLKLV (79 aa)).

It belongs to the UPF0770 family. As to quaternary structure, homotrimer. Zn(2+) serves as cofactor.

Functionally, the genomic context suggests a role in the biosynthesis of modified polysaccharides; this association with genes involved in carbohydrate metabolism is observed in several phylogenetically distinct taxa. Is not expected to have peptidase activity despite low similarity to aminopeptidases. The protein is Putative polysaccharide biosynthesis protein with aminopeptidase-like domain of Clostridium acetobutylicum (strain ATCC 824 / DSM 792 / JCM 1419 / IAM 19013 / LMG 5710 / NBRC 13948 / NRRL B-527 / VKM B-1787 / 2291 / W).